A 221-amino-acid chain; its full sequence is MTTEPNSPFVDDPLSAVDARILGSLVEKQATTPETYPLTLNALVLACNQKTSREPVMNLTPGQVGQSLRQLEGRGLVKLVMGSRADRWEHTLGKGLELVAPQVALLGLLFLRGPQTLNELLTRSNRLHDFDDVEQIRHHLERLAGRGLAVHLERRAGQREDRYMHLLGSQADLEAAVAAMGSDPERAAPAALSADAEARIAELETRLAALEERLTRLEGGV.

This sequence belongs to the UPF0502 family.

This Pseudomonas paraeruginosa (strain DSM 24068 / PA7) (Pseudomonas aeruginosa (strain PA7)) protein is UPF0502 protein PSPA7_1674.